A 260-amino-acid polypeptide reads, in one-letter code: uncharacterized protein (260 aa).

The signal sequence occupies residues M1–G22. C23 carries N-palmitoyl cysteine lipidation. C23 is lipidated: S-diacylglycerol cysteine.

This sequence belongs to the staphylococcal tandem lipoprotein family.

The protein resides in the cell membrane. This is an uncharacterized protein from Staphylococcus aureus (strain N315).